Here is a 169-residue protein sequence, read N- to C-terminus: MAAESLPFSFGTLSSWELEAWYEDLQEVLSSDENGGTYVSPPGNEEEESKIFTTLDPASLAWLTEEEPEPAEVTSTSQSPHSPDSSQSSLAQEEEEEDQGRTRKRKQSGHSPARAGKQRMKEKEQENERKVAQLAEENERLKQEIERLTREVEATRRALIDRMVNLHQA.

Residues 10 to 18 are interaction with TRIB3; sequence FGTLSSWEL. Residues 10–26 form an N-terminal region; it reads FGTLSSWELEAWYEDLQ. 4 positions are modified to phosphoserine; by CK2: serine 14, serine 15, serine 30, and serine 31. The segment at 32–139 is disordered; that stretch reads DENGGTYVSP…KVAQLAEENE (108 aa). Positions 74–89 are enriched in low complexity; it reads TSTSQSPHSPDSSQSS. A phosphoserine; by MAPK14 mark is found at serine 79 and serine 82. Residues 99–162 enclose the bZIP domain; that stretch reads QGRTRKRKQS…EATRRALIDR (64 aa). Positions 101-130 are basic motif; that stretch reads RTRKRKQSGHSPARAGKQRMKEKEQENERK. Residues 119–139 show a composition bias toward basic and acidic residues; that stretch reads RMKEKEQENERKVAQLAEENE. Residues 134–148 are leucine-zipper; the sequence is LAEENERLKQEIERL.

It belongs to the bZIP family. In terms of assembly, heterodimer. Interacts with TCF7L2/TCF4, EP300/P300, HDAC1, HDAC5 and HDAC6. Interacts with TRIB3 which blocks its association with EP300/P300. Interacts with FOXO3, CEBPB and ATF4. Interacts with isoform AltDDIT3 of DDIT3. In terms of processing, ubiquitinated, leading to its degradation by the proteasome. Phosphorylation at serine residues by MAPK14 enhances its transcriptional activation activity while phosphorylation at serine residues by CK2 inhibits its transcriptional activation activity.

The protein localises to the cytoplasm. Its subcellular location is the nucleus. Its function is as follows. Multifunctional transcription factor in endoplasmic reticulum (ER) stress response. Plays an essential role in the response to a wide variety of cell stresses and induces cell cycle arrest and apoptosis in response to ER stress. Plays a dual role both as an inhibitor of CCAAT/enhancer-binding protein (C/EBP) function and as an activator of other genes. Acts as a dominant-negative regulator of C/EBP-induced transcription: dimerizes with members of the C/EBP family, impairs their association with C/EBP binding sites in the promoter regions, and inhibits the expression of C/EBP regulated genes. Positively regulates the transcription of TRIB3, IL6, IL8, IL23, TNFRSF10B/DR5, PPP1R15A/GADD34, BBC3/PUMA, BCL2L11/BIM and ERO1L. Negatively regulates; expression of BCL2 and MYOD1, ATF4-dependent transcriptional activation of asparagine synthetase (ASNS), CEBPA-dependent transcriptional activation of hepcidin (HAMP) and CEBPB-mediated expression of peroxisome proliferator-activated receptor gamma (PPARG). Together with ATF4, mediates ER-mediated cell death by promoting expression of genes involved in cellular amino acid metabolic processes, mRNA translation and the unfolded protein response (UPR) in response to ER stress. Inhibits the canonical Wnt signaling pathway by binding to TCF7L2/TCF4, impairing its DNA-binding properties and repressing its transcriptional activity. Plays a regulatory role in the inflammatory response through the induction of caspase-11 (CASP4/CASP11) which induces the activation of caspase-1 (CASP1) and both these caspases increase the activation of pro-IL1B to mature IL1B which is involved in the inflammatory response. Acts as a major regulator of postnatal neovascularization through regulation of endothelial nitric oxide synthase (NOS3)-related signaling. This is DNA damage-inducible transcript 3 protein (DDIT3) from Homo sapiens (Human).